The following is a 410-amino-acid chain: ATP phosphoribosyltransferase regulatory subunit (410 aa).

This sequence belongs to the class-II aminoacyl-tRNA synthetase family. HisZ subfamily. As to quaternary structure, heteromultimer composed of HisG and HisZ subunits.

Its subcellular location is the cytoplasm. It participates in amino-acid biosynthesis; L-histidine biosynthesis; L-histidine from 5-phospho-alpha-D-ribose 1-diphosphate: step 1/9. Required for the first step of histidine biosynthesis. May allow the feedback regulation of ATP phosphoribosyltransferase activity by histidine. The sequence is that of ATP phosphoribosyltransferase regulatory subunit from Synechococcus sp. (strain JA-3-3Ab) (Cyanobacteria bacterium Yellowstone A-Prime).